A 307-amino-acid chain; its full sequence is Protein pxr1 (307 aa).

Over residues 1–11 the composition is skewed to basic residues; that stretch reads MGLAAPRKKTK. Disordered stretches follow at residues 1–25 and 144–234; these read MGLA…SRST and NATA…SDCD. The segment covering 15–25 has biased composition (polar residues); it reads DPNNTSWSRST. One can recognise a G-patch domain in the interval 25–79; it reads TDGFGHRILKAQGWTPGGFLGARNATHSDLFTTASASHIRVVLKDDTLGLGARPK. 2 stretches are compositionally biased toward basic and acidic residues: residues 154–168 and 206–221; these read LRVD…HESE and GKEL…EKKQ.

The protein belongs to the PINX1 family.

Its subcellular location is the nucleus. The protein localises to the nucleolus. Involved in rRNA-processing at A0, A1 and A2 sites and negatively regulates telomerase. In Neosartorya fischeri (strain ATCC 1020 / DSM 3700 / CBS 544.65 / FGSC A1164 / JCM 1740 / NRRL 181 / WB 181) (Aspergillus fischerianus), this protein is Protein pxr1 (pxr1).